The chain runs to 158 residues: MSTVSYYTAEGLKKLKDELEQLKAIERPKASADIAEARDKGDLSENAEYDAAKEAQGLLELKIKKMEEVYSNARLIDESQLDVSKALVLSHVKIKNQSNGMEMSYHLVAESEADLKTGKISVTSPIGKGLLGKSVGEIAEITVPNGILKFEVLEITRD.

A coiled-coil region spans residues 47–68; sequence AEYDAAKEAQGLLELKIKKMEE.

This sequence belongs to the GreA/GreB family.

In terms of biological role, necessary for efficient RNA polymerase transcription elongation past template-encoded arresting sites. The arresting sites in DNA have the property of trapping a certain fraction of elongating RNA polymerases that pass through, resulting in locked ternary complexes. Cleavage of the nascent transcript by cleavage factors such as GreA or GreB allows the resumption of elongation from the new 3'terminus. GreA releases sequences of 2 to 3 nucleotides. The protein is Transcription elongation factor GreA of Flavobacterium psychrophilum (strain ATCC 49511 / DSM 21280 / CIP 103535 / JIP02/86).